The primary structure comprises 520 residues: ATP-dependent clpX-like chaperone, mitochondrial (520 aa).

Residues 1-13 (MLKSASQNFFRAY) constitute a mitochondrion transit peptide. Position 140-147 (140-147 (GPSGSGKT)) interacts with ATP.

Belongs to the ClpX chaperone family. Homohexamer that forms a ring structure; this hexamerization requires ATP binding. Interacts with HEM1.

The protein localises to the mitochondrion inner membrane. Its function is as follows. ATP-dependent unfoldase that stimulates the incorporation of the pyridoxal phosphate cofactor into 5-aminolevulinate synthase (HEM1), thereby activating 5-aminolevulinate (ALA) synthesis, the first step in heme biosynthesis. Up-regulates heme biosynthesis. This chain is ATP-dependent clpX-like chaperone, mitochondrial, found in Saccharomyces cerevisiae (strain ATCC 204508 / S288c) (Baker's yeast).